The sequence spans 89 residues: Small ribosomal subunit protein uS15 (89 aa).

The protein belongs to the universal ribosomal protein uS15 family. Part of the 30S ribosomal subunit. Forms a bridge to the 50S subunit in the 70S ribosome, contacting the 23S rRNA.

Functionally, one of the primary rRNA binding proteins, it binds directly to 16S rRNA where it helps nucleate assembly of the platform of the 30S subunit by binding and bridging several RNA helices of the 16S rRNA. In terms of biological role, forms an intersubunit bridge (bridge B4) with the 23S rRNA of the 50S subunit in the ribosome. The chain is Small ribosomal subunit protein uS15 from Pasteurella multocida (strain Pm70).